A 71-amino-acid polypeptide reads, in one-letter code: Small ribosomal subunit protein bS21 (71 aa).

Residues 34-44 (RREHYEKPTSE) show a composition bias toward basic and acidic residues. The interval 34-71 (RREHYEKPTSERKRKKAAAVKRHAKKLSRDNARRTRLY) is disordered. Residues 45–59 (RKRKKAAAVKRHAKK) show a composition bias toward basic residues. Residues 60 to 71 (LSRDNARRTRLY) are compositionally biased toward basic and acidic residues.

This sequence belongs to the bacterial ribosomal protein bS21 family.

This is Small ribosomal subunit protein bS21 from Idiomarina loihiensis (strain ATCC BAA-735 / DSM 15497 / L2-TR).